Here is a 392-residue protein sequence, read N- to C-terminus: Small ribosomal subunit protein bS1 (392 aa).

S1 motif domains follow at residues 16-90, 108-173, 194-262, and 279-348; these read GDKV…LSKR, DEVI…LSRK, GDVI…LSIK, and DDVI…LSIK. A disordered region spans residues 361-380; the sequence is ASTTQSYLEDDNDEDKPTLG.

It belongs to the bacterial ribosomal protein bS1 family.

Its function is as follows. Binds mRNA; thus facilitating recognition of the initiation point. It is needed to translate mRNA with a short Shine-Dalgarno (SD) purine-rich sequence. The chain is Small ribosomal subunit protein bS1 (rpsA) from Staphylococcus epidermidis (strain ATCC 35984 / DSM 28319 / BCRC 17069 / CCUG 31568 / BM 3577 / RP62A).